The sequence spans 166 residues: Ribosome maturation factor RimM (166 aa).

The PRC barrel domain occupies 91 to 163 (EDEFYEFQLI…KMQITPPEGW (73 aa)).

Belongs to the RimM family. In terms of assembly, binds ribosomal protein uS19.

It is found in the cytoplasm. Its function is as follows. An accessory protein needed during the final step in the assembly of 30S ribosomal subunit, possibly for assembly of the head region. Essential for efficient processing of 16S rRNA. May be needed both before and after RbfA during the maturation of 16S rRNA. It has affinity for free ribosomal 30S subunits but not for 70S ribosomes. The sequence is that of Ribosome maturation factor RimM from Sulfurihydrogenibium sp. (strain YO3AOP1).